The sequence spans 894 residues: Kinesin-like protein KIN-UB (894 aa).

Residues 1–53 are disordered; sequence MAMASSRNGAVRGSMRPVSGANSSNLRSSSFKSRIPSSAPAPRRSSSASIGAA. Residues 19–50 are compositionally biased toward low complexity; it reads SGANSSNLRSSSFKSRIPSSAPAPRRSSSASI. The 343-residue stretch at 60-402 folds into the Kinesin motor domain; that stretch reads RVRVAVRLRP…ILFGQRAMKV (343 aa). An ATP-binding site is contributed by 145 to 152; sequence GQTGTGKT. The D-BOX motif lies at 372–380; that stretch reads RTSLIVTIG. A coiled-coil region spans residues 423-588; the sequence is VQLDKVIAEN…RSQLVQLTFE (166 aa). Disordered regions lie at residues 530–550 and 598–623; these read EEEV…GEGE and RGAP…ESVN. A compositionally biased stretch (polar residues) spans 603 to 623; that stretch reads NSYSGTDSLPSRHSQARESVN. ARM repeat units follow at residues 626 to 665, 667 to 707, 709 to 749, and 751 to 790; these read KAPF…NLAA, EANQ…NLAM, EVSQ…NLCG, and DKLQ…NFAK.

It belongs to the TRAFAC class myosin-kinesin ATPase superfamily. Kinesin family. Ungrouped subfamily. In terms of assembly, interacts (via C-terminus) with NEK5. Expressed in the basal regions and petioles of immature leaves and in the root elongation zone.

The protein localises to the cytoplasm. The protein resides in the cytoskeleton. Involved in the control of epidermal-cell morphogenesis in roots and helical growth of roots by promoting microtubule depolymerization and limiting the accumulation of endoplasmic microtubules. Seems to be involved in the control of cell-file rotation (or twisting). The sequence is that of Kinesin-like protein KIN-UB from Arabidopsis thaliana (Mouse-ear cress).